The following is a 577-amino-acid chain: Glycine--tRNA ligase (577 aa).

Residues Arg96 and Glu161 each coordinate substrate. ATP-binding positions include 193 to 195 (RNE), 203 to 208 (IRLREF), 319 to 320 (EI), and 434 to 437 (GIDR). Residue 208–212 (FSQAE) coordinates substrate. 430 to 434 (EPSFG) is a substrate binding site.

This sequence belongs to the class-II aminoacyl-tRNA synthetase family.

It is found in the cytoplasm. The catalysed reaction is tRNA(Gly) + glycine + ATP = glycyl-tRNA(Gly) + AMP + diphosphate. In terms of biological role, catalyzes the attachment of glycine to tRNA(Gly). The chain is Glycine--tRNA ligase from Methanothrix thermoacetophila (strain DSM 6194 / JCM 14653 / NBRC 101360 / PT) (Methanosaeta thermophila).